The following is a 408-amino-acid chain: Tripartite motif containing 13 (408 aa).

Residues C10 to R58 form an RING-type zinc finger. Residues P89–I131 form a B box-type zinc finger. Zn(2+)-binding residues include C94, H97, C117, and H123. The chain crosses the membrane as a helical span at residues I322–I342.

The protein localises to the endoplasmic reticulum membrane. It functions in the pathway protein modification; protein ubiquitination. E3 ubiquitin ligase involved in the retrotranslocation and turnover of membrane and secretory proteins from the ER through a set of processes named ER-associated degradation (ERAD). This process acts on misfolded proteins as well as in the regulated degradation of correctly folded proteins. The protein is Tripartite motif containing 13 (trim13) of Xenopus tropicalis (Western clawed frog).